Here is an 874-residue protein sequence, read N- to C-terminus: Alanine--tRNA ligase (874 aa).

Histidine 563, histidine 567, cysteine 665, and histidine 669 together coordinate Zn(2+).

This sequence belongs to the class-II aminoacyl-tRNA synthetase family. Requires Zn(2+) as cofactor.

Its subcellular location is the cytoplasm. It carries out the reaction tRNA(Ala) + L-alanine + ATP = L-alanyl-tRNA(Ala) + AMP + diphosphate. Its function is as follows. Catalyzes the attachment of alanine to tRNA(Ala) in a two-step reaction: alanine is first activated by ATP to form Ala-AMP and then transferred to the acceptor end of tRNA(Ala). Also edits incorrectly charged Ser-tRNA(Ala) and Gly-tRNA(Ala) via its editing domain. This Histophilus somni (strain 2336) (Haemophilus somnus) protein is Alanine--tRNA ligase.